Reading from the N-terminus, the 893-residue chain is Alanine--tRNA ligase (893 aa).

Positions 573, 577, 676, and 680 each coordinate Zn(2+). Positions 853–872 (LGGGGGGKDDLAQGGGQDPS) are disordered.

The protein belongs to the class-II aminoacyl-tRNA synthetase family. Requires Zn(2+) as cofactor.

It is found in the cytoplasm. It catalyses the reaction tRNA(Ala) + L-alanine + ATP = L-alanyl-tRNA(Ala) + AMP + diphosphate. Its function is as follows. Catalyzes the attachment of alanine to tRNA(Ala) in a two-step reaction: alanine is first activated by ATP to form Ala-AMP and then transferred to the acceptor end of tRNA(Ala). Also edits incorrectly charged Ser-tRNA(Ala) and Gly-tRNA(Ala) via its editing domain. This chain is Alanine--tRNA ligase, found in Kineococcus radiotolerans (strain ATCC BAA-149 / DSM 14245 / SRS30216).